Reading from the N-terminus, the 430-residue chain is Oleandomycin glycosyltransferase (430 aa).

Residues 385 to 430 (GGTRRAADLIEAELPARHERQEPVGDRPNVGDRPAGVRSDRQRSAL) are disordered. Basic and acidic residues predominate over residues 386–409 (GTRRAADLIEAELPARHERQEPVG).

The protein belongs to the UDP-glycosyltransferase family.

In terms of biological role, specifically inactivates oleandomycin via 2'-O-glycosylation using UDP-glucose. The chain is Oleandomycin glycosyltransferase (oleD) from Streptomyces antibioticus.